Here is a 387-residue protein sequence, read N- to C-terminus: Arginine biosynthesis bifunctional protein ArgJ 2 (387 aa).

The substrate site is built by threonine 147, lysine 169, threonine 180, glutamate 259, asparagine 382, and threonine 387. Threonine 180 (nucleophile) is an active-site residue.

This sequence belongs to the ArgJ family. As to quaternary structure, heterotetramer of two alpha and two beta chains.

It is found in the cytoplasm. The enzyme catalyses N(2)-acetyl-L-ornithine + L-glutamate = N-acetyl-L-glutamate + L-ornithine. It catalyses the reaction L-glutamate + acetyl-CoA = N-acetyl-L-glutamate + CoA + H(+). Its pathway is amino-acid biosynthesis; L-arginine biosynthesis; L-ornithine and N-acetyl-L-glutamate from L-glutamate and N(2)-acetyl-L-ornithine (cyclic): step 1/1. It participates in amino-acid biosynthesis; L-arginine biosynthesis; N(2)-acetyl-L-ornithine from L-glutamate: step 1/4. Functionally, catalyzes two activities which are involved in the cyclic version of arginine biosynthesis: the synthesis of N-acetylglutamate from glutamate and acetyl-CoA as the acetyl donor, and of ornithine by transacetylation between N(2)-acetylornithine and glutamate. The polypeptide is Arginine biosynthesis bifunctional protein ArgJ 2 (Nostoc sp. (strain PCC 7120 / SAG 25.82 / UTEX 2576)).